The following is a 346-amino-acid chain: Peroxidase 19 (346 aa).

The signal sequence occupies residues 1-31 (MHVISLSLSSIFFFLFLTSTILISPVQPTTS). Intrachain disulfides connect C51/C134, C84/C89, C140/C342, and C219/C251. H82 acts as the Proton acceptor in catalysis. D83, V86, G88, D90, and S92 together coordinate Ca(2+). P182 contacts substrate. N-linked (GlcNAc...) asparagine glycosylation is present at N185. H212 contributes to the heme b binding site. T213 lines the Ca(2+) pocket. Positions 265, 268, and 273 each coordinate Ca(2+).

Belongs to the peroxidase family. Classical plant (class III) peroxidase subfamily. The cofactor is heme b. Ca(2+) is required as a cofactor.

The protein resides in the secreted. The catalysed reaction is 2 a phenolic donor + H2O2 = 2 a phenolic radical donor + 2 H2O. In terms of biological role, removal of H(2)O(2), oxidation of toxic reductants, biosynthesis and degradation of lignin, suberization, auxin catabolism, response to environmental stresses such as wounding, pathogen attack and oxidative stress. These functions might be dependent on each isozyme/isoform in each plant tissue. The chain is Peroxidase 19 (PER19) from Arabidopsis thaliana (Mouse-ear cress).